The following is a 1082-amino-acid chain: MSWDDAIDGVDRDTPGGRMPRGWTVAARLRAANDDITHAAVADTLPAYAELHCLSDFSFLRGASSAEQLFARAHHCGYSALAITDECSLAGIVRGLEASRATGVRLIVGSEFTLIDCTRFVLLVENAHGYPQLCSVITTGRRAAGKGAYRLGRAEVEAHFRDVVPGVFALWLPGDQPQAEQGAWLQRVFAERAFLAVELHREQDDAARLQALQALAQQLGMSALASGDVHMAQRRDRIVQDTLTAIRHTLPLADCGAHLFRNGERHLRPRRALGNIYPHALLQASVELAQRCTFDLSKVQYTYPRELVPQGHTPASYLRQLTEAGMRERWPEGAPANVVAQIDSELELIAYKGYEAFFLTVQDVVRFARAQHILCQGRGSSANSAVCYALGITAVNPSETRLLMARFLSKERDEPPDIDVDFEHERREEVLQYVYTKYGRERAALAATVICYRGKSAVRDVAKAFGLPPDQIALLANCYGWGNGDTPMEQRIAEAGFDLANPLINKILAVTEHLRDHPRHLSQHVGGFVISDEPLSMLVPVENAAMADRTIIQWDKDDLETMQLLKVDCLALGMLTCIRKTLDLVRGHRGRDYTIATLPGEDAATYKMIQRADTVGVFQIESRAQMAMLPRLKPREFYDLVIEVAIVRPGPIQGDMVHPYLRRRQGYEPVSFPSPGVEEILGRTLGIPLFQEQVMELVIHAGYTDSEADQLRRSMAAWRRGGDMEPHRVRIRELMAGRGYAPEFIDQIFEQIKGFGSYGFPQSHAASFAKLVYASCWLKRHEPAAFACGLLNAQPMGFYSASQIVQDARRGSPERQRVEVLPVDVLHSDWDNILVGGRPWHSDADPGEQPAIRLGLRQVSGLSEKVVERIVAARAQRPFADIGDLCLRAALDEKARLALAEAGALQSMVGNRNAARWAMAGVEARRPLLPGSPAERAVELPAPRAGEEILADYRAVGLSLRQHPMALLRPQMLQRRILGLRELQARRHGSGVHVAGLVTQRQRPATAKGTIFVTLEDEHGMINVIVWSHLAMRRRRALLESRLLAVRGRWERVDGVEHLIAGDLYDLSDLLGEMQLPSRDFH.

This sequence belongs to the DNA polymerase type-C family. DnaE2 subfamily.

It is found in the cytoplasm. The enzyme catalyses DNA(n) + a 2'-deoxyribonucleoside 5'-triphosphate = DNA(n+1) + diphosphate. Functionally, DNA polymerase involved in damage-induced mutagenesis and translesion synthesis (TLS). It is not the major replicative DNA polymerase. The protein is Error-prone DNA polymerase of Xanthomonas campestris pv. campestris (strain B100).